The sequence spans 1070 residues: DNA double-strand break repair Rad50 ATPase (1070 aa).

Residues arginine 12, 32–38 (NGSGKSS), and glutamine 142 contribute to the ATP site. 3 coiled-coil regions span residues 227–257 (LEEL…RLQE), 369–403 (ECRT…EKAG), and 449–478 (LREL…KEIR). Positions 508–607 (LENLEDFNEL…KLNRLKEAKK (100 aa)) constitute a Zinc-hook domain. Zn(2+) is bound by residues cysteine 555 and cysteine 558. Coiled coils occupy residues 570 to 614 (TAEE…QAYD) and 878 to 908 (LKRL…ADEL). 969–974 (LLSGGE) lines the ATP pocket.

It belongs to the SMC family. RAD50 subfamily. In terms of assembly, homodimer. Forms a heterotetramer composed of two Mre11 subunits and two Rad50 subunits. Zn(2+) is required as a cofactor.

In terms of biological role, part of the Rad50/Mre11 complex, which is involved in the early steps of DNA double-strand break (DSB) repair. The complex may facilitate opening of the processed DNA ends to aid in the recruitment of HerA and NurA. Rad50 controls the balance between DNA end bridging and DNA resection via ATP-dependent structural rearrangements of the Rad50/Mre11 complex. The polypeptide is DNA double-strand break repair Rad50 ATPase (Methanosarcina mazei (strain ATCC BAA-159 / DSM 3647 / Goe1 / Go1 / JCM 11833 / OCM 88) (Methanosarcina frisia)).